A 124-amino-acid polypeptide reads, in one-letter code: Ribonuclease pancreatic (124 aa).

The segment covering 1 to 13 (KETAAAKFERQHM) has biased composition (basic and acidic residues). The tract at residues 1 to 24 (KETAAAKFERQHMDSSTSSASSSN) is disordered. 2 residues coordinate substrate: lysine 7 and arginine 10. Histidine 12 functions as the Proton acceptor in the catalytic mechanism. 4 disulfide bridges follow: cysteine 26–cysteine 84, cysteine 40–cysteine 95, cysteine 58–cysteine 110, and cysteine 65–cysteine 72. Substrate contacts are provided by residues 41–45 (KPVBT), lysine 66, and arginine 85. The Proton donor role is filled by histidine 119.

Belongs to the pancreatic ribonuclease family. As to quaternary structure, monomer. Interacts with and forms tight 1:1 complexes with RNH1. Dimerization of two such complexes may occur. Interaction with RNH1 inhibits this protein. As to expression, pancreas.

It localises to the secreted. It catalyses the reaction an [RNA] containing cytidine + H2O = an [RNA]-3'-cytidine-3'-phosphate + a 5'-hydroxy-ribonucleotide-3'-[RNA].. The catalysed reaction is an [RNA] containing uridine + H2O = an [RNA]-3'-uridine-3'-phosphate + a 5'-hydroxy-ribonucleotide-3'-[RNA].. Its function is as follows. Endonuclease that catalyzes the cleavage of RNA on the 3' side of pyrimidine nucleotides. Acts on single-stranded and double-stranded RNA. This is Ribonuclease pancreatic (RNASE1) from Boselaphus tragocamelus (Nilgai).